Reading from the N-terminus, the 279-residue chain is Thioredoxin-like 1-1, chloroplastic (279 aa).

A Thioredoxin domain is found at Ala56–Pro202. Catalysis depends on nucleophile residues Cys125 and Cys128. Residues Cys125 and Cys128 are joined by a disulfide bond.

This sequence belongs to the thioredoxin family.

In terms of biological role, probable thiol-disulfide oxidoreductase that may participate in various redox reactions. The polypeptide is Thioredoxin-like 1-1, chloroplastic (Oryza sativa subsp. japonica (Rice)).